A 218-amino-acid chain; its full sequence is Large ribosomal subunit protein bL25 (218 aa).

The segment at 187–218 (SATAAVEEAKEDGAPEESAQGQGAAEAQETNK) is disordered. Positions 202-218 (EESAQGQGAAEAQETNK) are enriched in low complexity.

Belongs to the bacterial ribosomal protein bL25 family. CTC subfamily. In terms of assembly, part of the 50S ribosomal subunit; part of the 5S rRNA/L5/L18/L25 subcomplex. Contacts the 5S rRNA. Binds to the 5S rRNA independently of L5 and L18.

Functionally, this is one of the proteins that binds to the 5S RNA in the ribosome where it forms part of the central protuberance. The chain is Large ribosomal subunit protein bL25 from Anaplasma marginale (strain St. Maries).